The following is a 461-amino-acid chain: UDP-N-acetylmuramoylalanine--D-glutamate ligase (461 aa).

123–129 (GTNGKTT) is a binding site for ATP.

This sequence belongs to the MurCDEF family.

It is found in the cytoplasm. The enzyme catalyses UDP-N-acetyl-alpha-D-muramoyl-L-alanine + D-glutamate + ATP = UDP-N-acetyl-alpha-D-muramoyl-L-alanyl-D-glutamate + ADP + phosphate + H(+). The protein operates within cell wall biogenesis; peptidoglycan biosynthesis. Its function is as follows. Cell wall formation. Catalyzes the addition of glutamate to the nucleotide precursor UDP-N-acetylmuramoyl-L-alanine (UMA). The chain is UDP-N-acetylmuramoylalanine--D-glutamate ligase from Natranaerobius thermophilus (strain ATCC BAA-1301 / DSM 18059 / JW/NM-WN-LF).